Consider the following 288-residue polypeptide: Bifunctional protein FolD (288 aa).

Residues 165 to 167 (GRS) and serine 190 each bind NADP(+).

It belongs to the tetrahydrofolate dehydrogenase/cyclohydrolase family. As to quaternary structure, homodimer.

It carries out the reaction (6R)-5,10-methylene-5,6,7,8-tetrahydrofolate + NADP(+) = (6R)-5,10-methenyltetrahydrofolate + NADPH. The enzyme catalyses (6R)-5,10-methenyltetrahydrofolate + H2O = (6R)-10-formyltetrahydrofolate + H(+). It participates in one-carbon metabolism; tetrahydrofolate interconversion. Its function is as follows. Catalyzes the oxidation of 5,10-methylenetetrahydrofolate to 5,10-methenyltetrahydrofolate and then the hydrolysis of 5,10-methenyltetrahydrofolate to 10-formyltetrahydrofolate. This chain is Bifunctional protein FolD, found in Bdellovibrio bacteriovorus (strain ATCC 15356 / DSM 50701 / NCIMB 9529 / HD100).